Reading from the N-terminus, the 380-residue chain is Protein Wnt-5a (380 aa).

Residues 1-35 (MKKSIGILSPGVALGTAGSAMSSKFFVMALAVFFS) form the signal peptide. The propeptide occupies 36-61 (FAQVVIEANSWWSLGMNNPVQMSEVY). Cysteine 104 and cysteine 115 are oxidised to a cystine. N-linked (GlcNAc...) asparagine glycans are attached at residues asparagine 114 and asparagine 120. 10 disulfides stabilise this stretch: cysteine 154–cysteine 162, cysteine 164–cysteine 182, cysteine 238–cysteine 252, cysteine 240–cysteine 247, cysteine 309–cysteine 340, cysteine 325–cysteine 335, cysteine 339–cysteine 379, cysteine 355–cysteine 370, cysteine 357–cysteine 367, and cysteine 362–cysteine 363. Residue serine 244 is the site of O-palmitoleoyl serine; by PORCN attachment. 2 N-linked (GlcNAc...) asparagine glycosylation sites follow: asparagine 312 and asparagine 326.

It belongs to the Wnt family. As to quaternary structure, forms a soluble 1:1 complex with AFM; this prevents oligomerization and is required for prolonged biological activity. The complex with AFM may represent the physiological form in body fluids. Homooligomer; disulfide-linked, leading to inactivation (in vitro). Interacts with PORCN. Interacts with WLS. Interacts with glypican GCP3. Interacts with PKD1 (via extracellular domain). Interacts with TMEM67. In terms of processing, glycosylation is necessary for secretion but not for activity. Palmitoleoylation is required for efficient binding to frizzled receptors. Depalmitoleoylation leads to Wnt signaling pathway inhibition. Post-translationally, proteolytic processing by TIKI1 and TIKI2 promotes oxidation and formation of large disulfide-bond oligomers, leading to inactivation of WNT5A.

It localises to the secreted. It is found in the extracellular space. The protein resides in the extracellular matrix. Functionally, ligand for members of the frizzled family of seven transmembrane receptors. Can activate or inhibit canonical Wnt signaling, depending on receptor context. In the presence of FZD4, activates beta-catenin signaling. In the presence of ROR2, inhibits the canonical Wnt pathway by promoting beta-catenin degradation through a GSK3-independent pathway which involves down-regulation of beta-catenin-induced reporter gene expression. Suppression of the canonical pathway allows chondrogenesis to occur. Inhibits tumor formation. Stimulates cell migration. Decreases proliferation, migration, invasiveness and clonogenicity of carcinoma cells and may act as a tumor suppressor. Mediates motility of melanoma cells. Required during embryogenesis for extension of the primary anterior-posterior axis and for outgrowth of limbs and the genital tubercle. Inhibits type II collagen expression in chondrocytes. This chain is Protein Wnt-5a, found in Oryctolagus cuniculus (Rabbit).